Reading from the N-terminus, the 134-residue chain is Global transcriptional regulator Spx (134 aa).

An intrachain disulfide couples Cys-10 to Cys-13.

Belongs to the ArsC family. Spx subfamily. In terms of assembly, interacts with the C-terminal domain of the alpha subunit of the RNAP.

It is found in the cytoplasm. Functionally, global transcriptional regulator that plays a key role in stress response and exerts either positive or negative regulation of genes. Acts by interacting with the C-terminal domain of the alpha subunit of the RNA polymerase (RNAP). This interaction can enhance binding of RNAP to the promoter region of target genes and stimulate their transcription, or block interaction of RNAP with activator. This Streptococcus pyogenes serotype M3 (strain ATCC BAA-595 / MGAS315) protein is Global transcriptional regulator Spx.